The primary structure comprises 261 residues: Protein unc-50 homolog (261 aa).

The next 6 membrane-spanning stretches (helical) occupy residues 37-57 (IFHY…YLCF), 82-102 (AFAV…AITF), 113-133 (VMFW…ATIG), 166-186 (SFFP…PILL), 190-210 (LFAA…YYYV), and 225-245 (VVFL…VVMG).

This sequence belongs to the unc-50 family.

The protein localises to the membrane. This is Protein unc-50 homolog from Dictyostelium discoideum (Social amoeba).